The primary structure comprises 86 residues: Large ribosomal subunit protein bL27 (86 aa).

Residues 1–26 form a disordered region; it reads MATKKAGGSSRNGRDSAGRRLGIKKS.

This sequence belongs to the bacterial ribosomal protein bL27 family.

This Rickettsia typhi (strain ATCC VR-144 / Wilmington) protein is Large ribosomal subunit protein bL27.